A 554-amino-acid chain; its full sequence is Glucose-6-phosphate isomerase (554 aa).

Catalysis depends on Glu-359, which acts as the Proton donor. Residues His-390 and Lys-518 contribute to the active site.

It belongs to the GPI family.

Its subcellular location is the cytoplasm. It catalyses the reaction alpha-D-glucose 6-phosphate = beta-D-fructose 6-phosphate. It functions in the pathway carbohydrate biosynthesis; gluconeogenesis. The protein operates within carbohydrate degradation; glycolysis; D-glyceraldehyde 3-phosphate and glycerone phosphate from D-glucose: step 2/4. In terms of biological role, catalyzes the reversible isomerization of glucose-6-phosphate to fructose-6-phosphate. The polypeptide is Glucose-6-phosphate isomerase (Pseudomonas fluorescens (strain ATCC BAA-477 / NRRL B-23932 / Pf-5)).